Here is a 305-residue protein sequence, read N- to C-terminus: Ribonuclease BN (305 aa).

7 residues coordinate Zn(2+): H64, H66, D68, H69, H141, D212, and H270. Residue D68 is the Proton acceptor of the active site.

The protein belongs to the RNase Z family. RNase BN subfamily. Homodimer. Zn(2+) serves as cofactor.

Zinc phosphodiesterase, which has both exoribonuclease and endoribonuclease activities. The protein is Ribonuclease BN of Citrobacter koseri (strain ATCC BAA-895 / CDC 4225-83 / SGSC4696).